Here is a 253-residue protein sequence, read N- to C-terminus: Sec-independent protein translocase protein TatC (253 aa).

The next 5 membrane-spanning stretches (helical) occupy residues 19–39 (ILII…LATP), 70–90 (FAFT…LWAF), 109–129 (IAFF…FPFL), 154–174 (FLFQ…VVMF), and 194–214 (FFVL…SHLM).

It belongs to the TatC family. Forms a complex with TatA.

It localises to the cell membrane. Part of the twin-arginine translocation (Tat) system that transports large folded proteins containing a characteristic twin-arginine motif in their signal peptide across membranes. This is Sec-independent protein translocase protein TatC from Halalkalibacterium halodurans (strain ATCC BAA-125 / DSM 18197 / FERM 7344 / JCM 9153 / C-125) (Bacillus halodurans).